A 994-amino-acid chain; its full sequence is Chloride channel protein 1 (994 aa).

Residues 1-118 are Cytoplasmic-facing; that stretch reads MERSQSQRHG…VLRRKLGEDW (118 aa). Residues 119–150 form a helical membrane-spanning segment; that stretch reads IFLVLLGLLMALVSWCMDYVSAKSLQAYKWTY. Residues 151–158 are Extracellular-facing; sequence AQMKPSLP. The helical transmembrane segment at 159–179 threads the bilayer; sequence LQYLAWVTFPLILILFSALFC. Residues 180–183 are Cytoplasmic-facing; it reads QLIS. An intramembrane region (note=Loop between two helices) is located at residues 184–189; it reads PQAVGS. The Selectivity filter part_1 signature appears at 188–192; sequence GSGIP. Ser-189 contacts chloride. Residues 190 to 195 constitute an intramembrane region (helical); the sequence is GIPEMK. Residues 196-208 lie on the Cytoplasmic side of the membrane; the sequence is TILRGVVLKEYLT. The segment at residues 209–224 is an intramembrane region (helical); that stretch reads LKAFVAKVVALTAGLG. The segment at residues 225 to 230 is an intramembrane region (note=Loop between two helices); sequence SGIPVG. Residues 230–234 carry the Selectivity filter part_2 motif; that stretch reads GKEGP. The segment at residues 231 to 246 is an intramembrane region (helical); sequence KEGPFVHIASICAAVL. Over 247–268 the chain is Cytoplasmic; the sequence is SKFMSMFSGVYEQPYYYTDILT. Intramembrane regions (helical) lie at residues 269–280 and 281–290; these read VGCAVGVGCCFG and TPLGGVLFSI. At 291 to 301 the chain is on the cytoplasmic side; that stretch reads EVTSTYFAVRN. A helical membrane pass occupies residues 302–321; sequence YWRGFFAATFSAFVFRVLAV. The Extracellular segment spans residues 322-347; that stretch reads WNKDAVTITALFRTNFRMDFPFDLKE. Residues 348–376 form a helical membrane-spanning segment; it reads LPAFAVIGICCGFLGAVFVYLHRQVMLGV. The Cytoplasmic segment spans residues 377–390; that stretch reads RKHKCLSQFLAKHR. Residues 391–408 form a helical membrane-spanning segment; it reads LLYPGIVTFVIASLTFPP. Over 409-414 the chain is Extracellular; the sequence is GMGQFM. An intramembrane region (note=Loop between two helices) is located at residues 415-418; sequence AGEL. Residues 419–426 constitute an intramembrane region (helical); sequence MPREAIST. The Extracellular segment spans residues 427–457; sequence LFDNNTWVKHIGDPQSLGQSAVWLHPQVNVI. The helical intramembrane region spans 458–475; it reads IIILLFFVMKFWMSIVAT. The note=Loop between two helices intramembrane region spans 476-482; it reads TMPIPCG. Residues 482–486 carry the Selectivity filter part_3 motif; it reads GGFMP. An intramembrane region (helical) is located at residues 483 to 498; it reads GFMPVFVLGAAFGRLV. Phe-484 serves as a coordination point for chloride. Over 499–521 the chain is Extracellular; that stretch reads GEIMAMLFPEGILFDDIIYKILP. The helical intramembrane region spans 522–538; sequence GGYAVIGAAALTGAVSH. An intramembrane region (note=Loop between two helices) is located at residues 539-540; that stretch reads TV. The segment at residues 541-554 is an intramembrane region (helical); sequence STAVICFELTGQIA. Over 555 to 557 the chain is Extracellular; that stretch reads HIL. Residues 558-571 constitute an intramembrane region (helical); the sequence is PMMVAVILANMVAQ. An intramembrane region (note=Loop between two helices) is located at residues 572–575; it reads SLQP. Positions 576 to 578 form an intramembrane region, helical; that stretch reads SLY. Tyr-578 provides a ligand contact to chloride. Residues 579 to 994 lie on the Cytoplasmic side of the membrane; it reads DSIIQVKKLP…DEEDEDELIL (416 aa). The CBS 1 domain maps to 609 to 668; that stretch reads MVRDVKFVSASCTYGELRNLLQATTVKTLPLVDSKDSMILLGSVERSELQSLLQRHLCAE. The tract at residues 710–770 is disordered; sequence EDEDEDLSRK…PEASDSADQR (61 aa). The span at 725–739 shows a compositional bias: pro residues; it reads TPAPPPPSPPPPPSQ. Residues 827–882 enclose the CBS 2 domain; the sequence is IDQSPFQLVEQTTLHKTHTLFSLLGLHLAYVTSMGKLRGVLALEELQKAIEGHTKS. 2 disordered regions span residues 886–954 and 971–994; these read LRPP…ARAE and ELADILHGPSLRSTDEEDEDELIL. A Phosphoserine modification is found at Ser-892. Residues 933-943 show a composition bias toward pro residues; that stretch reads PETPVPPPSPE. Residues 985–994 show a composition bias toward acidic residues; that stretch reads DEEDEDELIL.

It belongs to the chloride channel (TC 2.A.49) family. ClC-1/CLCN1 subfamily. Homodimer. As to expression, predominantly expressed in skeletal muscles.

Its subcellular location is the cell membrane. The protein localises to the sarcolemma. The protein resides in the T-tubule. The enzyme catalyses chloride(in) = chloride(out). It carries out the reaction thiocyanate(in) = thiocyanate(out). The catalysed reaction is bromide(in) = bromide(out). It catalyses the reaction nitrate(in) = nitrate(out). The enzyme catalyses iodide(out) = iodide(in). Modulated by membrane voltage with depolarization favouring channel opening and hyperpolarization favouring channel closure. Inhibited by acidic pH and ATP binding due to a shift of voltage dependence of common gating to more positive voltages. Inhibited by 9-anthracene-carboxylic. Voltage-gated chloride channel involved in skeletal muscle excitability. Generates most of the plasma membrane chloride conductance in skeletal muscle fibers, stabilizes the resting membrane potential and contributes to the repolarization phase during action potential firing. Forms a homodimeric channel where each subunit has its own ion conduction pathway. Conducts double-barreled currents controlled by two types of gates, two fast glutamate gates that control each subunit independently and a slow common gate that opens and shuts off both subunits simultaneously. Has a significant open probability at muscle resting potential and is further activated upon membrane depolarization. Permeable to small monovalent anions with ion selectivity for chloride &gt; thiocyanate &gt; bromide &gt; nitrate &gt; iodide. This Mus musculus (Mouse) protein is Chloride channel protein 1 (Clcn1).